We begin with the raw amino-acid sequence, 194 residues long: Auxin-induced protein 22A (194 aa).

The EAR-like (transcriptional repression) signature appears at 13-17 (LRLGL). Residues 40-62 (EIDDVGDENSSSGGGGDRKMENK) are disordered. A PB1 domain is found at 85–173 (KMYVKVSMDG…KRLRIMKRAD (89 aa)).

Belongs to the Aux/IAA family. In terms of assembly, homodimers and heterodimers.

It localises to the nucleus. Aux/IAA proteins are short-lived transcriptional factors that function as repressors of early auxin response genes at low auxin concentrations. Repression is thought to result from the interaction with auxin response factors (ARFs), proteins that bind to the auxin-responsive promoter element (AuxRE). Formation of heterodimers with ARF proteins may alter their ability to modulate early auxin response genes expression. This Vigna radiata var. radiata (Mung bean) protein is Auxin-induced protein 22A (AUX22A).